We begin with the raw amino-acid sequence, 247 residues long: UPF0280 protein MMP1236 (247 aa).

This sequence belongs to the UPF0280 family.

The protein is UPF0280 protein MMP1236 of Methanococcus maripaludis (strain DSM 14266 / JCM 13030 / NBRC 101832 / S2 / LL).